The sequence spans 224 residues: Small ribosomal subunit protein uS3 (224 aa).

The KH type-2 domain maps to 39 to 107; the sequence is IREFLKKKPS…DVWVEIAEVK (69 aa).

It belongs to the universal ribosomal protein uS3 family. Part of the 30S ribosomal subunit. Forms a tight complex with proteins S10 and S14.

Functionally, binds the lower part of the 30S subunit head. Binds mRNA in the 70S ribosome, positioning it for translation. This chain is Small ribosomal subunit protein uS3, found in Chlamydia trachomatis serovar A (strain ATCC VR-571B / DSM 19440 / HAR-13).